Consider the following 672-residue polypeptide: DNA ligase (672 aa).

Residues 34 to 38, 83 to 84, and E117 each bind NAD(+); these read DAEYD and SL. K119 serves as the catalytic N6-AMP-lysine intermediate. NAD(+) contacts are provided by R140, E177, K293, and K317. Zn(2+) contacts are provided by C411, C414, C429, and C434. In terms of domain architecture, BRCT spans 591–672; that stretch reads RVGGRFTGKT…FLAMLGVCRT (82 aa).

The protein belongs to the NAD-dependent DNA ligase family. LigA subfamily. Mg(2+) is required as a cofactor. Mn(2+) serves as cofactor.

The catalysed reaction is NAD(+) + (deoxyribonucleotide)n-3'-hydroxyl + 5'-phospho-(deoxyribonucleotide)m = (deoxyribonucleotide)n+m + AMP + beta-nicotinamide D-nucleotide.. DNA ligase that catalyzes the formation of phosphodiester linkages between 5'-phosphoryl and 3'-hydroxyl groups in double-stranded DNA using NAD as a coenzyme and as the energy source for the reaction. It is essential for DNA replication and repair of damaged DNA. The protein is DNA ligase of Geotalea uraniireducens (strain Rf4) (Geobacter uraniireducens).